We begin with the raw amino-acid sequence, 218 residues long: Octanoyltransferase (218 aa).

One can recognise a BPL/LPL catalytic domain in the interval 32–218; that stretch reads GEAAEAIWLL…LRTFPQHFPD (187 aa). Substrate-binding positions include 71 to 78, 151 to 153, and 164 to 166; these read RGGQYTYH, AIG, and GLS. The active-site Acyl-thioester intermediate is the cysteine 182.

Belongs to the LipB family.

It localises to the cytoplasm. It carries out the reaction octanoyl-[ACP] + L-lysyl-[protein] = N(6)-octanoyl-L-lysyl-[protein] + holo-[ACP] + H(+). The protein operates within protein modification; protein lipoylation via endogenous pathway; protein N(6)-(lipoyl)lysine from octanoyl-[acyl-carrier-protein]: step 1/2. Its function is as follows. Catalyzes the transfer of endogenously produced octanoic acid from octanoyl-acyl-carrier-protein onto the lipoyl domains of lipoate-dependent enzymes. Lipoyl-ACP can also act as a substrate although octanoyl-ACP is likely to be the physiological substrate. This chain is Octanoyltransferase, found in Cereibacter sphaeroides (strain ATCC 17029 / ATH 2.4.9) (Rhodobacter sphaeroides).